The chain runs to 602 residues: Fumarate reductase flavoprotein subunit (602 aa).

FAD-binding positions include 12–16, 36–38, 44–52, 156–158, 192–193, and Asp212; these read GAGGA, ISK, SHTVAAEGG, HFV, and AT. The residue at position 45 (His45) is a Tele-8alpha-FAD histidine. Active-site residues include His233 and Arg249. FAD is bound by residues 356–357, Glu380, and 391–397; these read HY and RLGSNSL. The interval 581–602 is disordered; sequence YGGEADAADKAEAANKKEKANG. Positions 587–602 are enriched in basic and acidic residues; that stretch reads AADKAEAANKKEKANG.

It belongs to the FAD-dependent oxidoreductase 2 family. FRD/SDH subfamily. Part of an enzyme complex containing four subunits: a flavoprotein (FrdA), an iron-sulfur protein (FrdB), and two hydrophobic anchor proteins (FrdC and FrdD). Can be cross-linked to SdhE. Purified from membrane fractions associated with protoporphyrinogen IX dehydrogenase (hemG). It depends on FAD as a cofactor.

It localises to the cell inner membrane. It catalyses the reaction a quinone + succinate = fumarate + a quinol. The catalysed reaction is a menaquinone + succinate = a menaquinol + fumarate. With respect to regulation, inhibited by oxaloacetate, a substrate analog. Two distinct, membrane-bound, FAD-containing enzymes are responsible for the catalysis of fumarate and succinate interconversion; fumarate reductase is used during anaerobic growth, and succinate dehydrogenase is used during aerobic growth. The QFR enzyme complex binds 2 quinones in or near the membrane; 1 near the [3Fe-4S] cluster (QP is proximal to the [3Fe-4S] cluster, on the cytoplasmic side of the membrane) while QD (the distal cluster) is on the other side of the membrane. It is not clear if both of the quinol-binding sites are functionally relevant. The polypeptide is Fumarate reductase flavoprotein subunit (frdA) (Escherichia coli (strain K12)).